A 507-amino-acid chain; its full sequence is Aromatase (507 aa).

Cys436 provides a ligand contact to heme.

Belongs to the cytochrome P450 family. Heme is required as a cofactor.

The protein localises to the membrane. It catalyses the reaction testosterone + 3 reduced [NADPH--hemoprotein reductase] + 3 O2 = 17beta-estradiol + formate + 3 oxidized [NADPH--hemoprotein reductase] + 4 H2O + 4 H(+). The catalysed reaction is androst-4-ene-3,17-dione + 3 reduced [NADPH--hemoprotein reductase] + 3 O2 = estrone + formate + 3 oxidized [NADPH--hemoprotein reductase] + 4 H2O + 4 H(+). Catalyzes the formation of aromatic C18 estrogens from C19 androgens. The sequence is that of Aromatase (CYP19A1) from Gallus gallus (Chicken).